The following is a 352-amino-acid chain: N-acetyl-gamma-glutamyl-phosphate reductase (352 aa).

The active site involves Cys155.

It belongs to the NAGSA dehydrogenase family. Type 1 subfamily.

The protein localises to the cytoplasm. The catalysed reaction is N-acetyl-L-glutamate 5-semialdehyde + phosphate + NADP(+) = N-acetyl-L-glutamyl 5-phosphate + NADPH + H(+). The protein operates within amino-acid biosynthesis; L-arginine biosynthesis; N(2)-acetyl-L-ornithine from L-glutamate: step 3/4. Its function is as follows. Catalyzes the NADPH-dependent reduction of N-acetyl-5-glutamyl phosphate to yield N-acetyl-L-glutamate 5-semialdehyde. In Rippkaea orientalis (strain PCC 8801 / RF-1) (Cyanothece sp. (strain PCC 8801)), this protein is N-acetyl-gamma-glutamyl-phosphate reductase.